A 187-amino-acid chain; its full sequence is UPF0232 protein MUL_0004 (187 aa).

The segment covering 1–12 has biased composition (gly residues); the sequence is MNGDGEQPGPGD. 2 disordered regions span residues 1–77 and 166–187; these read MNGD…QPLG and ASPS…DTYG. Residues 14–30 show a composition bias toward basic and acidic residues; the sequence is AARDELPSMDLVRRTLA. Over residues 31-55 the composition is skewed to low complexity; it reads EARAAARARGQDPGRGFAAGPAPRR.

Belongs to the UPF0232 family.

The sequence is that of UPF0232 protein MUL_0004 from Mycobacterium ulcerans (strain Agy99).